We begin with the raw amino-acid sequence, 239 residues long: Mediator of RNA polymerase II transcription subunit 7 (239 aa).

Disordered regions lie at residues 1-21 (MSSL…PPPP) and 43-66 (LFVN…DMSV). Residues 46–66 (NDEKGKTKGKEKKSDDRDMSV) show a composition bias toward basic and acidic residues.

This sequence belongs to the Mediator complex subunit 7 family. As to quaternary structure, component of the Mediator complex.

The protein localises to the nucleus. Component of the Mediator complex, a coactivator involved in the regulated transcription of nearly all RNA polymerase II-dependent genes. Mediator functions as a bridge to convey information from gene-specific regulatory proteins to the basal RNA polymerase II transcription machinery. Mediator is recruited to promoters by direct interactions with regulatory proteins and serves as a scaffold for the assembly of a functional preinitiation complex with RNA polymerase II and the general transcription factors. This is Mediator of RNA polymerase II transcription subunit 7 (MED7) from Cryptococcus neoformans var. neoformans serotype D (strain B-3501A) (Filobasidiella neoformans).